Here is a 103-residue protein sequence, read N- to C-terminus: Large ribosomal subunit protein uL24 (103 aa).

Belongs to the universal ribosomal protein uL24 family. Part of the 50S ribosomal subunit.

Its function is as follows. One of two assembly initiator proteins, it binds directly to the 5'-end of the 23S rRNA, where it nucleates assembly of the 50S subunit. Functionally, one of the proteins that surrounds the polypeptide exit tunnel on the outside of the subunit. The polypeptide is Large ribosomal subunit protein uL24 (Syntrophomonas wolfei subsp. wolfei (strain DSM 2245B / Goettingen)).